The following is a 152-amino-acid chain: Transcriptional regulator MraZ (152 aa).

2 consecutive SpoVT-AbrB domains span residues 5–52 (ASAI…PLKE) and 81–124 (ATEC…SDAE).

This sequence belongs to the MraZ family. As to quaternary structure, forms oligomers.

Its subcellular location is the cytoplasm. The protein resides in the nucleoid. The polypeptide is Transcriptional regulator MraZ (Pasteurella multocida (strain Pm70)).